Here is a 287-residue protein sequence, read N- to C-terminus: MARSLAALLLLLVAAAGASHAASPAEMYWKIALPTSPMPGAIRDLISPASSAASASKDKEDTVGSVFFLEKDLFPGSKMTLHFTRATAGAALLPRGRADSVPFASEKLPEILSQLSIPAGSPTADAMRSTLAVCEAARIASETAPKHKHYCATSLESMVELVASSLGTRDVHAVSTEVVNRAGPTPRQAYRVEAVRPVPVPGGDMVACHRMPYAYAVFGVHGIKGAAYTVTLAGADGTMAEAVAACHGDVDGHGVAVAEAYKRLGVAPGKVAVCHFLPQDDMLWVRN.

A signal peptide spans 1-21 (MARSLAALLLLLVAAAGASHA). The BURP domain maps to 67 to 287 (FFLEKDLFPG…PQDDMLWVRN (221 aa)).

Expressed in shoot.

The sequence is that of BURP domain-containing protein 2 (BURP2) from Oryza sativa subsp. japonica (Rice).